Here is a 343-residue protein sequence, read N- to C-terminus: 3-keto-steroid reductase (343 aa).

The NADP(+) site is built by L19 and T42. Residues S180 and Y203 each act as proton donor in the active site. NADP(+) is bound by residues Y203, K207, and S239. The active-site Lowers pKa of active site Tyr is K207.

It belongs to the short-chain dehydrogenases/reductases (SDR) family. ERG27 subfamily.

It catalyses the reaction a 3beta-hydroxysteroid + NADP(+) = a 3-oxosteroid + NADPH + H(+). Its pathway is steroid biosynthesis; zymosterol biosynthesis; zymosterol from lanosterol: step 5/6. Functionally, responsible for the reduction of the keto group on the C-3 of sterols. This is 3-keto-steroid reductase (ERG27) from Yarrowia lipolytica (strain CLIB 122 / E 150) (Yeast).